We begin with the raw amino-acid sequence, 691 residues long: Pentatricopeptide repeat-containing protein At5g27110 (691 aa).

PPR repeat units lie at residues 38-68 (DVVL…FDIR), 70-104 (DVYI…SICV), 106-140 (DSFT…GYVC), 141-171 (DVVV…MPER), 172-206 (DVAS…GFEP), 207-241 (NSVS…GFEL), 242-272 (DEYV…MPRK), 273-307 (SLVA…GTRP), 308-342 (SQTT…VVNA), 343-373 (DIYV…TQKD), 374-408 (VAES…GVKP), 409-443 (DVVT…RLET), 444-474 (DELL…IPKK), 475-509 (DVVS…GLKP), 510-540 (DGVT…MRSK), and 546-576 (IIEH…TPET). The tract at residues 582–657 (LLSTLFSACC…KPGCSWIEMS (76 aa)) is type E motif. Positions 658–688 (DKVCHFFAEDRSHLRAENVYECLALLSGHME) are type E(+) motif.

This sequence belongs to the PPR family. PCMP-E subfamily.

In Arabidopsis thaliana (Mouse-ear cress), this protein is Pentatricopeptide repeat-containing protein At5g27110 (PCMP-E14).